A 258-amino-acid polypeptide reads, in one-letter code: Phosphate import ATP-binding protein PstB (258 aa).

The 243-residue stretch at 5-247 (IDVSGLTAYY…SQIFSNPKEK (243 aa)) folds into the ABC transporter domain. ATP is bound at residue 37 to 44 (GPSGCGKS).

This sequence belongs to the ABC transporter superfamily. Phosphate importer (TC 3.A.1.7) family. In terms of assembly, the complex is composed of two ATP-binding proteins (PstB), two transmembrane proteins (PstC and PstA) and a solute-binding protein (PstS).

It is found in the cell membrane. The enzyme catalyses phosphate(out) + ATP + H2O = ADP + 2 phosphate(in) + H(+). Its function is as follows. Part of the ABC transporter complex PstSACB involved in phosphate import. Responsible for energy coupling to the transport system. The protein is Phosphate import ATP-binding protein PstB of Frankia casuarinae (strain DSM 45818 / CECT 9043 / HFP020203 / CcI3).